The sequence spans 124 residues: Small ribosomal subunit protein uS12 (124 aa).

The disordered stretch occupies residues 1–23 (MATINQLVRKPRKRPVAKSDVPA). Position 89 is a 3-methylthioaspartic acid (Asp-89). A disordered region spans residues 101-124 (ALDTSGVQNRRQGRSKYGTKRPKS). Positions 111–124 (RQGRSKYGTKRPKS) are enriched in basic residues.

This sequence belongs to the universal ribosomal protein uS12 family. As to quaternary structure, part of the 30S ribosomal subunit. Contacts proteins S8 and S17. May interact with IF1 in the 30S initiation complex.

Functionally, with S4 and S5 plays an important role in translational accuracy. In terms of biological role, interacts with and stabilizes bases of the 16S rRNA that are involved in tRNA selection in the A site and with the mRNA backbone. Located at the interface of the 30S and 50S subunits, it traverses the body of the 30S subunit contacting proteins on the other side and probably holding the rRNA structure together. The combined cluster of proteins S8, S12 and S17 appears to hold together the shoulder and platform of the 30S subunit. This Chromohalobacter salexigens (strain ATCC BAA-138 / DSM 3043 / CIP 106854 / NCIMB 13768 / 1H11) protein is Small ribosomal subunit protein uS12.